The primary structure comprises 196 residues: Large ribosomal subunit protein bL9c (196 aa).

Residues 1 to 41 (MASTTSTLSLSWSNSFHSFAGAISEPQKSPENCRVMLPIVA) constitute a chloroplast transit peptide.

Component of the chloroplast large ribosomal subunit (LSU). Mature 70S chloroplast ribosomes of higher plants consist of a small (30S) and a large (50S) subunit. The 30S small subunit contains 1 molecule of ribosomal RNA (16S rRNA) and 24 different proteins. The 50S large subunit contains 3 rRNA molecules (23S, 5S and 4.5S rRNA) and 33 different proteins.

The protein resides in the plastid. The protein localises to the chloroplast. Functionally, component of the chloroplast ribosome (chloro-ribosome), a dedicated translation machinery responsible for the synthesis of chloroplast genome-encoded proteins, including proteins of the transcription and translation machinery and components of the photosynthetic apparatus. The chain is Large ribosomal subunit protein bL9c (RPL9) from Spinacia oleracea (Spinach).